A 416-amino-acid chain; its full sequence is Ena/VASP-like protein (416 aa).

In terms of domain architecture, WH1 spans 1-112 (MSEQSICQAR…NAMLFALNIM (112 aa)). Positions 114 to 129 (SQEGGPSSQRQVQNGP) are enriched in polar residues. Disordered regions lie at residues 114–133 (SQEG…SPDE) and 141–369 (VMEQ…PAGS). The residue at position 130 (Ser-130) is a Phosphoserine. Basic and acidic residues predominate over residues 141-157 (VMEQHQQQRQESLERRT). Residues 169–180 (PSSAASAPVSCS) show a composition bias toward low complexity. Residues 181–206 (GPPPPPPPPVPPPPTGATPPPPPPLP) show a composition bias toward pro residues. Residues 222–242 (GLAAAIAGAKLRRVQRPEDAS) form an EVH2 block A region. The tract at residues 222-413 (GLAAAIAGAK…DAIRQELSGI (192 aa)) is EVH2. A KLKR motif is present at residues 231–234 (KLRR). Over residues 242–253 (SGGSSPSGTSKS) the composition is skewed to low complexity. 2 positions are modified to phosphoserine: Ser-246 and Ser-259. Residues 265–282 (GGLMEEMNKLLAKRRKAA) are EVH2 block B. Residues 299-320 (EDPSTSPSPGTRAASQPPNSSE) show a composition bias toward polar residues. Ser-304, Ser-306, Ser-329, Ser-331, Ser-341, Ser-349, Ser-354, and Ser-369 each carry phosphoserine. Over residues 321–331 (AGRKPWERSNS) the composition is skewed to basic and acidic residues. The tract at residues 342-362 (RTPSVAKSPEAKSPLQSQPHS) is required for interaction with ZDHHC17. The tract at residues 379-413 (DLDRMKQEILEEVVRELHKVKEEIIDAIRQELSGI) is EVH2 block C.

It belongs to the Ena/VASP family. Homotetramer. Binds to the SH3 domains of ABL1, LYN and SRC. Also binds to profilin, with preference for isoform IIa of PFN2, and the WW domain of APBB1/FE65. Binds to SEMA6A. Interacts, via the Pro-rich region, with the C-terminal SH3 domain of DNMBP. Interacts with RAPH1. Binds, via the EVH1 domain, the Pro-rich domain of Listeria monocytogenes actA. Binds, via the EVH1 domain, the Pro-rich domain of ZYX. Interacts with FYB1. Interacts with ZDHHC17. Phosphorylated by PKA; phosphorylation abolishes binding to SH3 domains of ABL and SRC.

The protein localises to the cytoplasm. The protein resides in the cytoskeleton. It localises to the stress fiber. Its subcellular location is the cell projection. It is found in the lamellipodium. Its function is as follows. Ena/VASP proteins are actin-associated proteins involved in a range of processes dependent on cytoskeleton remodeling and cell polarity such as axon guidance and lamellipodial and filopodial dynamics in migrating cells. EVL enhances actin nucleation and polymerization. The protein is Ena/VASP-like protein (EVL) of Homo sapiens (Human).